We begin with the raw amino-acid sequence, 3855 residues long: Replicase polyprotein 1ab (3855 aa).

Residues 8–28 (CMCTPAARVFWNAGQVFCTRC) form a C4-type; atypical zinc finger. Residues 69 to 180 (ECTPSGCCWL…QPFCPFEEAH (112 aa)) enclose the Peptidase C31 domain. The segment at 69–182 (ECTPSGCCWL…FCPFEEAHSS (114 aa)) is PCP1-alpha. Active-site for nsp1-alpha papain-like cysteine proteinase activity residues include cysteine 76 and histidine 146. Residues 203–204 (MM) form an important for host EIF2AK2 inhibition region. The interval 269 to 384 (PDVFDGKCWL…IFRFGAHKWY (116 aa)) is PCP1-beta. Positions 269-385 (PDVFDGKCWL…FRFGAHKWYG (117 aa)) constitute a Peptidase C32 domain. Catalysis depends on for nsp1-beta papain-like cysteine proteinase activity residues cysteine 276 and histidine 345. The interval 418–505 (ITTYSPPTDG…GVHWEVEVRS (88 aa)) is OTU-like. Positions 420–527 (TYSPPTDGSC…VGVCSEGCVA (108 aa)) constitute a Peptidase C33 domain. Active-site for nsp2 cysteine proteinase activity residues include cysteine 429 and histidine 498. Disordered regions lie at residues 752–797 (PSDP…DAGA) and 1047–1088 (PPPK…SRVS). Residues 775-790 (APASTTTLVREQTPDN) are compositionally biased toward polar residues. The next 3 membrane-spanning stretches (helical) occupy residues 1134–1154 (GSMA…LLLC), 1179–1199 (GVFG…SNPV), and 1252–1272 (WHVL…VYVV). Positions 1149–1272 (LALLLCRSYP…DLALSLVYVV (124 aa)) are HD1. Positions 1327-1351 (TGWRGCWRGESPIHQPHQKPIAYAN) are WCCH. The next 5 helical transmembrane spans lie at 1468–1488 (LAVA…LWFT), 1521–1541 (LCVS…QLSG), 1543–1563 (EVGI…RMAL), 1573–1593 (AFCA…PILL), and 1609–1629 (FLVF…GLLW). Residues 1468–1629 (LAVAQVSAWT…LSLGITGLLW (162 aa)) form an HD2 region. The region spanning 1694 to 1896 (GAFRTHKPCL…SLLASVPVVE (203 aa)) is the Peptidase S32 domain. Residues histidine 1732, aspartate 1757, and serine 1810 each act as charge relay system; for serine protease nsp4 activity in the active site. 4 helical membrane passes run 1919 to 1939 (WTPI…AVLV), 1943 to 1963 (FSFA…VLMI), 1977 to 1997 (LAFY…TFAG), and 2020 to 2040 (SCVP…LWLF). The HD3 stretch occupies residues 1919–2040 (WTPIVAVGFF…HTLGVILWLF (122 aa)). The NiRAN domain occupies 2381 to 2544 (IISQLQGLTT…LPYKLYPVRG (164 aa)). The 135-residue stretch at 2783-2917 (GRCLEADLAS…YAERPTFPNY (135 aa)) folds into the RdRp catalytic domain. The AV ZBD domain maps to 3038–3101 (GKKFRHCGIC…SPVGAGRSPL (64 aa)). Cysteine 3044, cysteine 3047, cysteine 3057, cysteine 3062, histidine 3065, histidine 3067, histidine 3069, histidine 3071, cysteine 3078, histidine 3080, cysteine 3087, and cysteine 3090 together coordinate Zn(2+). The (+)RNA virus helicase ATP-binding domain occupies 3151-3310 (DLSDGDYQVV…VFDQMPQKQL (160 aa)). Position 3186–3193 (3186–3193 (GPPGSGKT)) interacts with ATP. The region spanning 3311-3440 (TTIYRFGPNI…FSRGDELVVL (130 aa)) is the (+)RNA virus helicase C-terminal domain. The AV-Nsp11N/CoV-Nsp15M domain occupies 3479 to 3576 (EGSCMPLPQV…LTLYIRGEPQ (98 aa)). Residues 3578 to 3700 (LPETLVSTGR…MVWKGATAYF (123 aa)) form the NendoU domain. Residues histidine 3609, histidine 3624, and lysine 3653 contribute to the active site.

The protein belongs to the arteriviridae polyprotein family. As to quaternary structure, nsp1-alpha papain-like: Interacts with host RNF31. Interacts with host EIF2AK2; this interaction occurs in host stress granules and leads to EIF2AK2 inhibition. Interacts with host G3BP1; this interaction probably plays a role in Nsp1-beta-mediated inhibition of host EIF2AK2. In terms of assembly, interacts with host DDX18; this interaction redistributes host DDX18 to the cytoplasm. As to quaternary structure, interacts with host IFITM1. Interacts with host DDX5. In terms of assembly, interacts with host OTULIN. As to quaternary structure, interacts with host LGALS3. In terms of processing, specific enzymatic cleavages in vivo by its own proteases yield mature proteins. Nsp1 is autocleaved into two subunits, Nsp1-alpha and Nsp1-beta. There are two alternative pathways for processing. Either nsp4-5 is cleaved, which represents the major pathway or the nsp5-6 and nsp6-7 are processed, which represents the minor pathway. The major pathway occurs when nsp2 acts as a cofactor for nsp4.

The protein resides in the host nucleus. Its subcellular location is the host cytoplasm. The protein localises to the host membrane. It is found in the host endoplasmic reticulum. It localises to the host perinuclear region. It catalyses the reaction RNA(n) + a ribonucleoside 5'-triphosphate = RNA(n+1) + diphosphate. It carries out the reaction ATP + H2O = ADP + phosphate + H(+). The catalysed reaction is Thiol-dependent hydrolysis of ester, thioester, amide, peptide and isopeptide bonds formed by the C-terminal Gly of ubiquitin (a 76-residue protein attached to proteins as an intracellular targeting signal).. The enzyme catalyses uridylyl-uridylyl-ribonucleotide-RNA = a 3'-end uridylyl-2',3'-cyclophospho-uridine-RNA + a 5'-end dephospho-ribonucleoside-RNA. In terms of biological role, contains the activities necessary for the transcription of negative stranded RNA, leader RNA, subgenomic mRNAs and progeny virion RNA as well as proteinases responsible for the cleavage of the polyprotein into functional products. Its function is as follows. Inhibits host IFN-beta production. Plays a role in the degradation of the host transcriptional activator CREBBP protein. The degradation of host CREBBP which is a key component of the IFN enhanceosome is likely responsible for the inhibition of interferon mediated by Nsp1-alpha. Also participates in the inhibition of host NF-kappa-B activation by counteracting LUBAC-dependent induction of NF-kappa-B. Reduces host NEMO ubiquitination by blocking the interaction between the two LUBAC complex components RNF31 and SHARPIN. Plays a role in blocking host mRNA nuclear export to the cytoplasm and subversion of host protein synthesis. Additionally, inhibits the interferon-activated JAK/STAT signal transduction by mediating the ubiquitination and subsequent proteasomal degradation of host KPNA1. Repurposes the host antiviral stress granules into a proviral platform to counteract the EIF2AK2/PKR restriction, thereby regulating the host inflammatory response. Functionally, multifunctional protein that acts as a viral protease and as a viral antagonist of host immune response. Cleaves the nsp2/nsp3 site in the viral polyprotein. Displays deubiquitinating activity that cleaves both ubiquitinated and ISGylated products and therefore inhibits ubiquitin and ISG15-dependent host innate immunity. Also deubiquinates host NFKBIA, thereby interfering with NFKBIA degradation and impairing subsequent NF-kappa-B activation. In terms of biological role, plays a role in the inhibition of the immune response by interacting with host IFITM1. This interaction leads to the proteasomal degradation of the IFN-induced antiviral protein IFITM1. Its function is as follows. Cleaves the majority of cleavage sites present in the C-terminus of the polyprotein. Triggers host apoptosis through caspase-3, -8, and -9 activations. Subverts host innate immune responses through its protease activity. Targets the NF-kappa-B essential modulator NEMO and mediates its cleavage. Blocks host interferon beta induction and downstream signaling by cleaving mitochondrial MAVS, dislodging it from the mitochondria. Impairs host defense by cleaving host mRNA-decapping enzyme DCP1A to attenuate its antiviral activity. Plays a role in the initial induction of autophagosomes from host endoplasmic reticulum. Functionally, plays a role in the inhibition of host STAT3 signaling pathway by inducing the degradation of STAT3. In terms of biological role, responsible for replication and transcription of the viral RNA genome. Its function is as follows. Displays RNA and DNA duplex-unwinding activities with 5' to 3' polarity. Plays a role in viral transcription/replication and prevents the simultaneous activation of host cell dsRNA sensors, such as MDA5/IFIH1, OAS, PKR and NLRP3 inflammasome. Acts by degrading the 5'-polyuridines generated during replication of the poly(A) region of viral genomic and subgenomic RNAs. Catalyzes a two-step reaction in which a 2'3'-cyclic phosphate (2'3'-cP) is first generated by 2'-O transesterification, which is then hydrolyzed to a 3'-phosphate (3'-P). If not degraded, poly(U) RNA would hybridize with poly(A) RNA tails and activate host dsRNA sensors. Also plays a role in the inhibition of host type I interferon production by recruiting host OTULIN to promote removal of linear ubiquitination targeting host NEMO. In Sus scrofa (Pig), this protein is Replicase polyprotein 1ab (rep).